The primary structure comprises 264 residues: Small ribosomal subunit protein uS2 (264 aa).

The protein belongs to the universal ribosomal protein uS2 family.

The sequence is that of Small ribosomal subunit protein uS2 (rpsB) from Helicobacter pylori (strain ATCC 700392 / 26695) (Campylobacter pylori).